The chain runs to 528 residues: Tyrosine-protein kinase transforming protein Yes (528 aa).

A compositionally biased stretch (basic and acidic residues) spans 1-12 (DKGPAMKYRTDN). The interval 1–35 (DKGPAMKYRTDNTPEPISSHVSHYGSDSSQATQSP) is disordered. The segment covering 18–29 (SSHVSHYGSDSS) has biased composition (low complexity). The SH3 domain occupies 81 to 142 (GGGTVFVALY…PSNYVAPADS (62 aa)). Residues 148-245 (WYFGKMGRKD…GLCHKLTTVC (98 aa)) form the SH2 domain. Positions 267–520 (LRLEVKLGQG…YIQSFLEDYF (254 aa)) constitute a Protein kinase domain. Residues 273-281 (LGQGCFGEV) and Lys295 each bind ATP. The Proton acceptor role is filled by Asp386. At Tyr416 the chain carries Phosphotyrosine; by autocatalysis.

Belongs to the protein kinase superfamily. Tyr protein kinase family. SRC subfamily.

The enzyme catalyses L-tyrosyl-[protein] + ATP = O-phospho-L-tyrosyl-[protein] + ADP + H(+). This is Tyrosine-protein kinase transforming protein Yes (V-YES) from Galliformes (Y73SV).